The primary structure comprises 362 residues: uncharacterized protein (362 aa).

A run of 7 helical transmembrane segments spans residues 32 to 52 (GAGW…VGAV), 75 to 95 (FVDA…ADGV), 106 to 126 (VVML…DLSV), 148 to 168 (AAVG…GVGA), 176 to 196 (GVGT…VVVV), 287 to 307 (VFAL…PVAM), and 329 to 349 (VLVA…CGMF).

It belongs to the peptidase S58 family.

The protein resides in the cell membrane. Functionally, aminopeptidase. This is an uncharacterized protein from Mycobacterium leprae (strain TN).